The following is a 324-amino-acid chain: ATP-dependent 6-phosphofructokinase (324 aa).

Gly15 is an ATP binding site. 25–29 contributes to the ADP binding site; sequence RGVVR. ATP-binding positions include 76–77 and 106–109; these read RF and GDGS. Asp107 contacts Mg(2+). 130–132 contacts substrate; that stretch reads TID. The Proton acceptor role is filled by Asp132. Arg159 is an ADP binding site. Substrate contacts are provided by residues Arg167 and 174–176; that span reads MGR. ADP is bound by residues 190–192, Lys216, and 218–220; these read GCE and KRH. Substrate is bound by residues Glu227, Arg248, and 254–257; that span reads HIQR.

The protein belongs to the phosphofructokinase type A (PFKA) family. ATP-dependent PFK group I subfamily. Prokaryotic clade 'B1' sub-subfamily. Homotetramer. Requires Mg(2+) as cofactor.

The protein resides in the cytoplasm. It catalyses the reaction beta-D-fructose 6-phosphate + ATP = beta-D-fructose 1,6-bisphosphate + ADP + H(+). It functions in the pathway carbohydrate degradation; glycolysis; D-glyceraldehyde 3-phosphate and glycerone phosphate from D-glucose: step 3/4. Allosterically activated by ADP and other diphosphonucleosides, and allosterically inhibited by phosphoenolpyruvate. Catalyzes the phosphorylation of D-fructose 6-phosphate to fructose 1,6-bisphosphate by ATP, the first committing step of glycolysis. The chain is ATP-dependent 6-phosphofructokinase from Haemophilus ducreyi (strain 35000HP / ATCC 700724).